Reading from the N-terminus, the 1234-residue chain is DNA-directed RNA polymerase subunit beta (1234 aa).

It belongs to the RNA polymerase beta chain family. As to quaternary structure, the RNAP catalytic core consists of 2 alpha, 1 beta, 1 beta' and 1 omega subunit. When a sigma factor is associated with the core the holoenzyme is formed, which can initiate transcription.

It carries out the reaction RNA(n) + a ribonucleoside 5'-triphosphate = RNA(n+1) + diphosphate. Its function is as follows. DNA-dependent RNA polymerase catalyzes the transcription of DNA into RNA using the four ribonucleoside triphosphates as substrates. This Clostridium perfringens (strain ATCC 13124 / DSM 756 / JCM 1290 / NCIMB 6125 / NCTC 8237 / Type A) protein is DNA-directed RNA polymerase subunit beta.